Reading from the N-terminus, the 453-residue chain is Homogentisate 1,2-dioxygenase (453 aa).

The tract at residues 1–42 (MLEKAEKQRRAGSGQQRAAGYMPGFGNDFETESLPGALPQGQ) is disordered. The Proton acceptor role is filled by histidine 306. Positions 349 and 355 each coordinate Fe cation. Residues tyrosine 364 and histidine 385 each coordinate homogentisate. A Fe cation-binding site is contributed by histidine 385.

It belongs to the homogentisate dioxygenase family. In terms of assembly, hexamer; dimer of trimers. It depends on Fe cation as a cofactor.

It catalyses the reaction homogentisate + O2 = 4-maleylacetoacetate + H(+). The protein operates within amino-acid degradation; L-phenylalanine degradation; acetoacetate and fumarate from L-phenylalanine: step 4/6. Involved in the catabolism of homogentisate (2,5-dihydroxyphenylacetate or 2,5-OH-PhAc), a central intermediate in the degradation of phenylalanine and tyrosine. Catalyzes the oxidative ring cleavage of the aromatic ring of homogentisate to yield maleylacetoacetate. In Rhizobium meliloti (strain 1021) (Ensifer meliloti), this protein is Homogentisate 1,2-dioxygenase.